Consider the following 700-residue polypeptide: Cap-specific mRNA (nucleoside-2'-O-)-methyltransferase 2 (700 aa).

A disordered region spans residues 1-21 (MSFRSSPQGKPHPMTDYQSIR). The Adrift-type SAM-dependent 2'-O-MTase domain occupies 109-321 (EFVTVAWCKL…VYVICLNYNK (213 aa)). Lys-117 is a catalytic residue. S-adenosyl-L-methionine-binding residues include Gly-143, Trp-164, and Asp-234. The active site involves Asp-234. The active-site Proton acceptor is the Lys-274.

The protein localises to the nucleus. It catalyses the reaction a 5'-end (N(7)-methyl 5'-triphosphoguanosine)-(2'-O-methyl-ribonucleoside)-(ribonucleotide) in mRNA + S-adenosyl-L-methionine = a 5'-end (N(7)-methyl 5'-triphosphoguanosine)-(2'-O-methyl-ribonucleoside)-(2'-O-methyl-ribonucleotide) in mRNA + S-adenosyl-L-homocysteine + H(+). Functionally, probable S-adenosyl-L-methionine-dependent methyltransferase that mediates mRNA cap2 2'-O-ribose methylation to the 5'-cap structure of mRNAs. May methylate the ribose of the second nucleotide of a m(7)GpppG-capped mRNA (cap0) to produce m(7)GpppRmpNm (cap2). Regulates expression of tracheal genes required for pathfinding on the segmental nerve. The sequence is that of Cap-specific mRNA (nucleoside-2'-O-)-methyltransferase 2 (cmtr2) from Drosophila melanogaster (Fruit fly).